The following is a 263-amino-acid chain: L-aspartate dehydrogenase (263 aa).

NAD(+) is bound by residues Ala120 and Asn186. His216 is a catalytic residue.

This sequence belongs to the L-aspartate dehydrogenase family.

The catalysed reaction is L-aspartate + NADP(+) + H2O = oxaloacetate + NH4(+) + NADPH + H(+). It carries out the reaction L-aspartate + NAD(+) + H2O = oxaloacetate + NH4(+) + NADH + H(+). It functions in the pathway cofactor biosynthesis; NAD(+) biosynthesis; iminoaspartate from L-aspartate (dehydrogenase route): step 1/1. In terms of biological role, specifically catalyzes the NAD or NADP-dependent dehydrogenation of L-aspartate to iminoaspartate. This Acinetobacter baylyi (strain ATCC 33305 / BD413 / ADP1) protein is L-aspartate dehydrogenase.